We begin with the raw amino-acid sequence, 202 residues long: Lipoprotein signal peptidase (202 aa).

Positions 1-29 are disordered; it reads MPDEPTGSADPLTSTEEAGGAGEPNAPAP. 3 consecutive transmembrane segments (helical) span residues 35–55, 88–108, and 112–132; these read MLLS…VVAV, GYTW…FWMG, and VSPW…GNLV. Active-site residues include aspartate 148 and aspartate 162. The chain crosses the membrane as a helical span at residues 160-180; it reads VADPSVVGGAILLVILSIFGF.

This sequence belongs to the peptidase A8 family.

It is found in the cell membrane. It carries out the reaction Release of signal peptides from bacterial membrane prolipoproteins. Hydrolyzes -Xaa-Yaa-Zaa-|-(S,diacylglyceryl)Cys-, in which Xaa is hydrophobic (preferably Leu), and Yaa (Ala or Ser) and Zaa (Gly or Ala) have small, neutral side chains.. It functions in the pathway protein modification; lipoprotein biosynthesis (signal peptide cleavage). Functionally, this protein specifically catalyzes the removal of signal peptides from prolipoproteins. The polypeptide is Lipoprotein signal peptidase (Mycobacterium bovis (strain ATCC BAA-935 / AF2122/97)).